An 892-amino-acid chain; its full sequence is Microsomal triglyceride transfer protein homolog (892 aa).

Residues 1-19 form the signal peptide; that stretch reads MFSSRIWLLLAVTVGVCLA.

In terms of assembly, heterodimer; heterodimerizes with protein disulfide isomerase.

It localises to the endoplasmic reticulum. Functionally, catalyzes the transport of cholesteryl ester, and phospholipid between phospholipid surfaces. Does not catalyze transport of triglycerides. Required for the assembly and secretion of plasma lipoproteins that contain apolipoprotein B. Required for normal expression of klf-3. This Caenorhabditis elegans protein is Microsomal triglyceride transfer protein homolog.